A 990-amino-acid polypeptide reads, in one-letter code: Presequence protease, mitochondrial (990 aa).

The transit peptide at 1–25 directs the protein to the mitochondrion; that stretch reads MLRLKSLKKPVQAVVRRFATTSAPT. Histidine 89 provides a ligand contact to Zn(2+). Glutamate 92 (proton acceptor) is an active-site residue. Histidine 93 lines the Zn(2+) pocket. The active site involves glutamate 165. Glutamate 190 contacts Zn(2+).

The protein belongs to the peptidase M16 family. PreP subfamily. In terms of assembly, monomer and homodimer; homodimerization is induced by binding of the substrate. Requires Zn(2+) as cofactor.

It is found in the mitochondrion intermembrane space. The protein localises to the mitochondrion matrix. In terms of biological role, degrades mitochondrial transit peptides after their cleavage in the intermembrane space or in the matrix, and presequence peptides; clearance of these peptides is required to keep the presequence processing machinery running. Preferentially cleaves the N-terminal side of paired basic amino acid residues. Also degrades other unstructured peptides. May function as an ATP-dependent peptidase as opposed to a metalloendopeptidase. The chain is Presequence protease, mitochondrial (CYM1) from Yarrowia lipolytica (strain CLIB 122 / E 150) (Yeast).